Here is a 208-residue protein sequence, read N- to C-terminus: N-(5'-phosphoribosyl)anthranilate isomerase (208 aa).

Belongs to the TrpF family.

It carries out the reaction N-(5-phospho-beta-D-ribosyl)anthranilate = 1-(2-carboxyphenylamino)-1-deoxy-D-ribulose 5-phosphate. The protein operates within amino-acid biosynthesis; L-tryptophan biosynthesis; L-tryptophan from chorismate: step 3/5. This is N-(5'-phosphoribosyl)anthranilate isomerase from Methanococcus vannielii (strain ATCC 35089 / DSM 1224 / JCM 13029 / OCM 148 / SB).